The primary structure comprises 451 residues: Tubulin beta-1 chain (451 aa).

The short motif at 1 to 4 (MREI) is the MREI motif element. Positions 11, 69, 138, 142, 143, and 144 each coordinate GTP. Mg(2+) is bound at residue Glu-69. Ser-172 is subject to Phosphoserine; by CDK1. Asn-204 and Asn-226 together coordinate GTP. The segment at 430–451 (AGLEDSEEDVEEAEVEAEDKDH) is disordered. Positions 433–451 (EDSEEDVEEAEVEAEDKDH) are enriched in acidic residues. The residue at position 435 (Ser-435) is a Phosphoserine. Glu-440 bears the 5-glutamyl polyglutamate mark.

Belongs to the tubulin family. In terms of assembly, dimer of alpha and beta chains. A typical microtubule is a hollow water-filled tube with an outer diameter of 25 nm and an inner diameter of 15 nM. Alpha-beta heterodimers associate head-to-tail to form protofilaments running lengthwise along the microtubule wall with the beta-tubulin subunit facing the microtubule plus end conferring a structural polarity. Microtubules usually have 13 protofilaments but different protofilament numbers can be found in some organisms and specialized cells. Interacts with RANBP10. Mg(2+) is required as a cofactor. Post-translationally, some glutamate residues at the C-terminus are polyglycylated, resulting in polyglycine chains on the gamma-carboxyl group. Glycylation is mainly limited to tubulin incorporated into axonemes (cilia and flagella) whereas glutamylation is prevalent in neuronal cells, centrioles, axonemes, and the mitotic spindle. Both modifications can coexist on the same protein on adjacent residues, and lowering polyglycylation levels increases polyglutamylation, and reciprocally. Cilia and flagella glycylation is required for their stability and maintenance. Flagella glycylation controls sperm motility. In terms of processing, some glutamate residues at the C-terminus are polyglutamylated, resulting in polyglutamate chains on the gamma-carboxyl group. Polyglutamylation plays a key role in microtubule severing by spastin (SPAST). SPAST preferentially recognizes and acts on microtubules decorated with short polyglutamate tails: severing activity by SPAST increases as the number of glutamates per tubulin rises from one to eight, but decreases beyond this glutamylation threshold. Glutamylation is also involved in cilia motility. Phosphorylated on Ser-172 by CDK1 during the cell cycle, from metaphase to telophase, but not in interphase. This phosphorylation inhibits tubulin incorporation into microtubules.

Its subcellular location is the cytoplasm. It is found in the cytoskeleton. In terms of biological role, tubulin is the major constituent of microtubules, a cylinder consisting of laterally associated linear protofilaments composed of alpha- and beta-tubulin heterodimers. Microtubules grow by the addition of GTP-tubulin dimers to the microtubule end, where a stabilizing cap forms. Below the cap, tubulin dimers are in GDP-bound state, owing to GTPase activity of alpha-tubulin. The protein is Tubulin beta-1 chain (Tubb1) of Mus musculus (Mouse).